The sequence spans 286 residues: NADPH-dependent 7-cyano-7-deazaguanine reductase (286 aa).

92–94 (IES) is a binding site for substrate. 94–95 (SK) contacts NADPH. The Thioimide intermediate role is filled by Cys-194. Asp-201 acts as the Proton donor in catalysis. 233–234 (HE) lines the substrate pocket. NADPH is bound at residue 262–263 (RG).

It belongs to the GTP cyclohydrolase I family. QueF type 2 subfamily. In terms of assembly, homodimer.

The protein resides in the cytoplasm. It carries out the reaction 7-aminomethyl-7-carbaguanine + 2 NADP(+) = 7-cyano-7-deazaguanine + 2 NADPH + 3 H(+). Its pathway is tRNA modification; tRNA-queuosine biosynthesis. Functionally, catalyzes the NADPH-dependent reduction of 7-cyano-7-deazaguanine (preQ0) to 7-aminomethyl-7-deazaguanine (preQ1). The sequence is that of NADPH-dependent 7-cyano-7-deazaguanine reductase from Shewanella oneidensis (strain ATCC 700550 / JCM 31522 / CIP 106686 / LMG 19005 / NCIMB 14063 / MR-1).